A 156-amino-acid polypeptide reads, in one-letter code: MKNRSLALSQSILVLHGPNLNLLGVREPQHYGRDTLDDINRRLTQQAKAAGFSLSALQSNAEHILIERIHQCLDDGTAFILINPAAFTHTSVALRDALAAVKVPFIEVHLSNVHAREPFRQHSYFSDLALGVICGLGAHGYELALAHAMRHLSAQA.

Residue Y31 is the Proton acceptor of the active site. 3 residues coordinate substrate: N83, H89, and D96. The Proton donor role is filled by H109. Substrate is bound by residues 110–111 (LS) and R120.

The protein belongs to the type-II 3-dehydroquinase family. As to quaternary structure, homododecamer.

The catalysed reaction is 3-dehydroquinate = 3-dehydroshikimate + H2O. The protein operates within metabolic intermediate biosynthesis; chorismate biosynthesis; chorismate from D-erythrose 4-phosphate and phosphoenolpyruvate: step 3/7. In terms of biological role, catalyzes a trans-dehydration via an enolate intermediate. This chain is 3-dehydroquinate dehydratase, found in Chromobacterium violaceum (strain ATCC 12472 / DSM 30191 / JCM 1249 / CCUG 213 / NBRC 12614 / NCIMB 9131 / NCTC 9757 / MK).